The following is a 163-amino-acid chain: ATP synthase subunit b' (163 aa).

A helical transmembrane segment spans residues 28 to 45 (LMAIQFLLLALILNATLY).

The protein belongs to the ATPase B chain family. As to quaternary structure, F-type ATPases have 2 components, F(1) - the catalytic core - and F(0) - the membrane proton channel. F(1) has five subunits: alpha(3), beta(3), gamma(1), delta(1), epsilon(1). F(0) has four main subunits: a(1), b(1), b'(1) and c(10-14). The alpha and beta chains form an alternating ring which encloses part of the gamma chain. F(1) is attached to F(0) by a central stalk formed by the gamma and epsilon chains, while a peripheral stalk is formed by the delta, b and b' chains.

Its subcellular location is the cellular thylakoid membrane. F(1)F(0) ATP synthase produces ATP from ADP in the presence of a proton or sodium gradient. F-type ATPases consist of two structural domains, F(1) containing the extramembraneous catalytic core and F(0) containing the membrane proton channel, linked together by a central stalk and a peripheral stalk. During catalysis, ATP synthesis in the catalytic domain of F(1) is coupled via a rotary mechanism of the central stalk subunits to proton translocation. Its function is as follows. Component of the F(0) channel, it forms part of the peripheral stalk, linking F(1) to F(0). The b'-subunit is a diverged and duplicated form of b found in plants and photosynthetic bacteria. The protein is ATP synthase subunit b' of Nostoc sp. (strain PCC 7120 / SAG 25.82 / UTEX 2576).